The following is a 275-amino-acid chain: Expansin-A23 (275 aa).

The N-terminal stretch at 1 to 27 is a signal peptide; sequence MNLLGKMIYVEGFMMIMATLLVSMSYG. One can recognise an Expansin-like EG45 domain in the interval 72 to 182; it reads QGACGYGDLF…RRISCARTGG (111 aa). Residues 192 to 271 enclose the Expansin-like CBD domain; that stretch reads YFLMILPYNV…NWGFGQTFDG (80 aa).

It belongs to the expansin family. Expansin A subfamily.

It is found in the secreted. It localises to the cell wall. The protein resides in the membrane. In terms of biological role, causes loosening and extension of plant cell walls by disrupting non-covalent bonding between cellulose microfibrils and matrix glucans. No enzymatic activity has been found. The sequence is that of Expansin-A23 (EXPA23) from Arabidopsis thaliana (Mouse-ear cress).